A 473-amino-acid chain; its full sequence is 3-isopropylmalate dehydratase large subunit (473 aa).

[4Fe-4S] cluster contacts are provided by Cys-349, Cys-409, and Cys-412.

It belongs to the aconitase/IPM isomerase family. LeuC type 1 subfamily. Heterodimer of LeuC and LeuD. [4Fe-4S] cluster is required as a cofactor.

The enzyme catalyses (2R,3S)-3-isopropylmalate = (2S)-2-isopropylmalate. It participates in amino-acid biosynthesis; L-leucine biosynthesis; L-leucine from 3-methyl-2-oxobutanoate: step 2/4. Its function is as follows. Catalyzes the isomerization between 2-isopropylmalate and 3-isopropylmalate, via the formation of 2-isopropylmaleate. The sequence is that of 3-isopropylmalate dehydratase large subunit from Gloeobacter violaceus (strain ATCC 29082 / PCC 7421).